We begin with the raw amino-acid sequence, 424 residues long: Histidine--tRNA ligase (424 aa).

Belongs to the class-II aminoacyl-tRNA synthetase family. As to quaternary structure, homodimer.

It localises to the cytoplasm. It carries out the reaction tRNA(His) + L-histidine + ATP = L-histidyl-tRNA(His) + AMP + diphosphate + H(+). In Escherichia coli (strain SE11), this protein is Histidine--tRNA ligase.